We begin with the raw amino-acid sequence, 134 residues long: Natriuretic peptides B (134 aa).

Positions 1–26 (MDPQTAPSRALLLLLFLHLAFLGGRS) are cleaved as a signal peptide. A glycan (O-linked (Xyl...) (chondroitin sulfate) serine) is linked at Ser41. Thr62 carries O-linked (HexNAc...) threonine; Partial glycosylation. Residues Ser63 and Ser70 are each glycosylated (O-linked (HexNAc...) serine). Thr74 carries an O-linked (HexNAc...) threonine glycan. O-linked (HexNAc...) serine glycosylation is present at Ser79. An O-linked (HexNAc...) threonine; Partial glycan is attached at Thr84. The O-linked (HexNAc...) threonine glycan is linked to Thr97. A disulfide bridge links Cys112 with Cys128.

It belongs to the natriuretic peptide family. Post-translationally, the precursor molecule is proteolytically cleaved by the endoproteases FURIN or CORIN at Arg-102 to produce brain natriuretic peptide 32 and NT-proBNP. This likely occurs after it has been secreted into the blood, either during circulation or in the target cells. CORIN also cleaves the precursor molecule at additional residues including Arg-99 and possibly Lys-105. In patients with heart failure, processing and degradation of natriuretic peptides B occurs but is delayed, possibly due to a decrease in enzyme level or activity of CORIN and DPP4. In terms of processing, undergoes further proteolytic cleavage by various proteases such as DPP4, MME and possibly FAP, to give rise to a variety of shorter peptides. Cleaved at Pro-104 by the prolyl endopeptidase FAP (seprase) activity (in vitro). Degraded by IDE. During IDE degradation, the resulting products initially increase the activation of NPR1 and can also stimulate NPR2 to produce cGMP before the fragments are completely degraded and inactivated by IDE (in vitro). O-glycosylated on at least seven residues. In cardiomyocytes, glycosylation at Thr-97 is essential for the stability and processing of the extracellular natriuretic peptides B. Glycosylation, especially at Thr-97, may also be important for brain natriuretic peptide 32 stability and/or extracellular distribution. Glycosylation at Thr-97 appears to inhibit FURIN- or CORIN-mediated proteolytic processing, at least in HEK293 cells. Detected in the cardiac atria (at protein level). Detected in the kidney distal tubular cells (at protein level).

The protein localises to the secreted. In terms of biological role, cardiac hormone that plays a key role in mediating cardio-renal homeostasis. May also function as a paracrine antifibrotic factor in the heart. Acts by specifically binding and stimulating NPR1 to produce cGMP, which in turn activates effector proteins that drive various biological responses. Involved in regulating the extracellular fluid volume and maintaining the fluid-electrolyte balance through natriuresis, diuresis, vasorelaxation, and inhibition of renin and aldosterone secretion. Binds the clearance receptor NPR3. Functionally, may affect cardio-renal homeostasis. Able to promote the production of cGMP although its potency is very low compared to brain natriuretic peptide 32. Its function is as follows. May have a role in cardio-renal homeostasis. Able to promote the production of cGMP. The chain is Natriuretic peptides B (NPPB) from Homo sapiens (Human).